The sequence spans 914 residues: Solute carrier family 12 member 9 (914 aa).

The Cytoplasmic segment spans residues 1-36 (MASENSPLLAYRLLGEEGAAFPPNGAGGSGVASARK). A Phosphoserine modification is found at Ser-6. Residues 37–57 (LSTFLGVVVPTVLSMFSIVVF) form a helical membrane-spanning segment. At 58 to 72 (LRIGFVVGHAGLLQA) the chain is on the extracellular side. Residues 73–93 (LAMLLVAYVILALTVLSVCAI) form a helical membrane-spanning segment. The Cytoplasmic portion of the chain corresponds to 94-119 (ATNGAVRGGGAYFMISRTLGPEVGGS). A helical transmembrane segment spans residues 120 to 140 (IGLMFYLANVCGCAVSLLGLV). The Extracellular segment spans residues 141–167 (ESILDVFGADVTGSSGIKVLPQGYGWN). Residues 168–188 (LLYGSLLLGLVGGVCALGAGL) form a helical membrane-spanning segment. The Cytoplasmic portion of the chain corresponds to 189 to 193 (YARAS). Residues 194 to 214 (FLTFLLVSGSLASVLVSFVAV) traverse the membrane as a helical segment. The Extracellular portion of the chain corresponds to 215 to 262 (GPRNITLAPRPGTNGSSVPPRHGHFTGFNGSTLKDNLGAGYAEDYTTG). Asn-218, Asn-228, and Asn-243 each carry an N-linked (GlcNAc...) asparagine glycan. A helical membrane pass occupies residues 263-283 (AMMTFASVFAVLFNGCTGIMA). Over 284 to 297 (GANMSGELKDPSRA) the chain is Cytoplasmic. The chain crosses the membrane as a helical span at residues 298–318 (IPLGTIIAVAYTFFIYILLFF). Residues 319-338 (LSSFTCDRALLQGDYGFFRD) are Extracellular-facing. A helical transmembrane segment spans residues 339 to 359 (ISLWPPLVLIGIYATALSASM). Topologically, residues 360–376 (SSLIGASRILHALAQDD) are cytoplasmic. Residues 377 to 399 (LFGVILAPAKVVSGGGNPWGAVL) form a helical membrane-spanning segment. The Extracellular portion of the chain corresponds to 400–416 (YSWGLVQLVLLAGKLNT). A helical transmembrane segment spans residues 417–437 (LAAVVTVFYLVAYAAVDLSCL). Over 438-466 (SLEWASAPNFRPTFSLFSWHTCLLGVASC) the chain is Cytoplasmic. Residues 467 to 487 (LLMMFLISPGAAGGSLLLMGL) form a helical membrane-spanning segment. Over 488-740 (LSALLTARGG…LLRPRGGPGY (253 aa)) the chain is Extracellular. The tract at residues 645–678 (PAFSEPAEGTREGGSPALSTLFPPPRAPGSPRAL) is disordered. Residues 741–761 (VDVCGLFLLQMATILSMVPAW) form a helical membrane-spanning segment. Over 762–914 (HSARLRIFLC…GVTPVTCTDL (153 aa)) the chain is Cytoplasmic. The tract at residues 843 to 864 (QQGRGTGGGPGGPEGRDGEEGP) is disordered. Positions 846–855 (RGTGGGPGGP) are enriched in gly residues.

It belongs to the SLC12A transporter family. In terms of assembly, interacts with SLC12A1.

It is found in the cell membrane. Its subcellular location is the lysosome membrane. Its function is as follows. May be an inhibitor of SLC12A1. Seems to correspond to a subunit of a multimeric transport system and thus, additional subunits may be required for its function. May play a role in lysosomal ion flux and osmoregulation. In Rattus norvegicus (Rat), this protein is Solute carrier family 12 member 9 (Slc12a9).